Here is a 316-residue protein sequence, read N- to C-terminus: tRNA dimethylallyltransferase (316 aa).

17–24 contacts ATP; that stretch reads GPTASGKT. Substrate is bound at residue 19 to 24; the sequence is TASGKT. Interaction with substrate tRNA stretches follow at residues 42–45, 166–170, and 247–252; these read DSAL, QRLSR, and RCVGYR.

It belongs to the IPP transferase family. Monomer. The cofactor is Mg(2+).

It carries out the reaction adenosine(37) in tRNA + dimethylallyl diphosphate = N(6)-dimethylallyladenosine(37) in tRNA + diphosphate. Its function is as follows. Catalyzes the transfer of a dimethylallyl group onto the adenine at position 37 in tRNAs that read codons beginning with uridine, leading to the formation of N6-(dimethylallyl)adenosine (i(6)A). This chain is tRNA dimethylallyltransferase, found in Salmonella paratyphi A (strain ATCC 9150 / SARB42).